The chain runs to 198 residues: MKQFIDFIPLLLFFIVYKTEPRAVDILGNTYMVGGIFSATAMLIISSVVVYGILYLKQRKLEKSQWLTLVACLVFGSLTLAFHSETFLKWKAPVVNWLFAVAFAGSHFIGDRPIIQRIMGHALTLPAAIWTRLNIAWIVFFLFCGAANLYVAFTYQEFWVDFKVFGSLGMTLIFLVGQGIYLSRHLHDTAPNTTKSED.

The next 5 membrane-spanning stretches (helical) occupy residues 36–56, 67–87, 90–110, 133–153, and 162–182; these read IFSA…ILYL, LTLV…SETF, WKAP…HFIG, LNIA…YVAF, and FKVF…GIYL.

This sequence belongs to the YciB family.

The protein localises to the cell inner membrane. Its function is as follows. Plays a role in cell envelope biogenesis, maintenance of cell envelope integrity and membrane homeostasis. This is Inner membrane-spanning protein YciB from Pseudomonas savastanoi pv. phaseolicola (strain 1448A / Race 6) (Pseudomonas syringae pv. phaseolicola (strain 1448A / Race 6)).